We begin with the raw amino-acid sequence, 94 residues long: DNA-directed RNA polymerase subunit Rpo11 (94 aa).

The protein belongs to the archaeal Rpo11/eukaryotic RPB11/RPC19 RNA polymerase subunit family. In terms of assembly, part of the RNA polymerase complex.

The protein resides in the cytoplasm. It catalyses the reaction RNA(n) + a ribonucleoside 5'-triphosphate = RNA(n+1) + diphosphate. Functionally, DNA-dependent RNA polymerase (RNAP) catalyzes the transcription of DNA into RNA using the four ribonucleoside triphosphates as substrates. The chain is DNA-directed RNA polymerase subunit Rpo11 from Thermococcus kodakarensis (strain ATCC BAA-918 / JCM 12380 / KOD1) (Pyrococcus kodakaraensis (strain KOD1)).